A 174-amino-acid chain; its full sequence is UPF0316 protein LMHCC_0787 (174 aa).

Helical transmembrane passes span 4-24, 36-56, and 62-82; these read GIFI…IYTV, LAAL…SLVL, and IANV…GMKI.

This sequence belongs to the UPF0316 family.

It is found in the cell membrane. The sequence is that of UPF0316 protein LMHCC_0787 from Listeria monocytogenes serotype 4a (strain HCC23).